The chain runs to 187 residues: Threonylcarbamoyl-AMP synthase (187 aa).

One can recognise a YrdC-like domain in the interval 4-187; sequence TLTLSEAVTA…DARSGHILRL (184 aa).

It belongs to the SUA5 family. TsaC subfamily.

It localises to the cytoplasm. The enzyme catalyses L-threonine + hydrogencarbonate + ATP = L-threonylcarbamoyladenylate + diphosphate + H2O. Functionally, required for the formation of a threonylcarbamoyl group on adenosine at position 37 (t(6)A37) in tRNAs that read codons beginning with adenine. Catalyzes the conversion of L-threonine, HCO(3)(-)/CO(2) and ATP to give threonylcarbamoyl-AMP (TC-AMP) as the acyladenylate intermediate, with the release of diphosphate. The chain is Threonylcarbamoyl-AMP synthase from Xylella fastidiosa (strain M12).